A 258-amino-acid chain; its full sequence is Alcohol dehydrogenase 2 (258 aa).

Residue 9-33 (IFVGGLGFIGYEACKQLMAKNMASF) participates in NAD(+) binding. Substrate is bound at residue Ser137. Tyr150 functions as the Proton acceptor in the catalytic mechanism.

This sequence belongs to the short-chain dehydrogenases/reductases (SDR) family. As to quaternary structure, homodimer.

The catalysed reaction is a primary alcohol + NAD(+) = an aldehyde + NADH + H(+). It catalyses the reaction a secondary alcohol + NAD(+) = a ketone + NADH + H(+). The chain is Alcohol dehydrogenase 2 (ADH2) from Ceratitis capitata (Mediterranean fruit fly).